Here is a 566-residue protein sequence, read N- to C-terminus: MTTREYDYIICGAGSAGNVLATRLTEDPNVTVLLLEAGGPDYRFDFRTQMPAALAYPLQGRRYNWAYETDPEPHMDNRRMECGRGKGLGGSSLINGMCYIRGNALDYDNWSTHKGLENWTYLDCLPYFKKAETRDVGPNDYHGGDGPVSVTTSKPGVNPLFEAMVDAGVQAGYPRTDDLNGYQQEGFGPMDRTVTPKGRRASTARGYLDQAKGRPNLEIVTHALADRILFDGKRASGVTYLRGSERANAHARREVLVCSGAIASPQLLQRSGVGPGAWLKELDIPIVLDLPGVGQNLQDHLEMYIQYECKEPVSLYPALKWWNQPKIGLEWMLNGTGLGASNHFEAGGFIRTRDDDPWPNIQYHFLPVAINYNGSNAIEMHGFQAHVGSMRSPSRGRVKLRSRDPNAHPSILFNYMAEALDWREFRDAIRATREIMRQPALDRYRGRELNPGADCKSDKELDTFVRSRAETAFHPSCSCKMGYDDMAVVDEEGRVHGLEGLRVVDASIMPIITTGNLNAPTIMIAEKIADKIRGRQPLARVDVPYFVANGAMARNVAKAVRQPETV.

7 to 36 serves as a coordination point for FAD; it reads DYIICGAGSAGNVLATRLTEDPNVTVLLLE. The tract at residues 180–203 is disordered; that stretch reads NGYQQEGFGPMDRTVTPKGRRAST. His474 acts as the Proton acceptor in catalysis.

The protein belongs to the GMC oxidoreductase family. FAD is required as a cofactor.

It catalyses the reaction choline + A = betaine aldehyde + AH2. It carries out the reaction betaine aldehyde + NAD(+) + H2O = glycine betaine + NADH + 2 H(+). It functions in the pathway amine and polyamine biosynthesis; betaine biosynthesis via choline pathway; betaine aldehyde from choline (cytochrome c reductase route): step 1/1. Functionally, involved in the biosynthesis of the osmoprotectant glycine betaine. Catalyzes the oxidation of choline to betaine aldehyde and betaine aldehyde to glycine betaine at the same rate. The polypeptide is Oxygen-dependent choline dehydrogenase (Burkholderia ambifaria (strain MC40-6)).